A 56-amino-acid chain; its full sequence is UPF0434 protein WIGBR2520 (56 aa).

The protein belongs to the UPF0434 family.

This Wigglesworthia glossinidia brevipalpis protein is UPF0434 protein WIGBR2520.